We begin with the raw amino-acid sequence, 487 residues long: MSLPNSSCLLEDKMCEGNKTTMASPQLMPLVVVLSTICLVTVGLNLLVLYAVRSERKLHTVGNLYIVSLSVADLIVGAVVMPMNILYLLMSKWSLGRPLCLFWLSMDYVASTASIFSVFILCIDRYRSVQQPLRYLKYRTKTRASATILGAWFLSFLWVIPILGWNHFMQQTSVRREDKCETDFYDVTWFKVMTAIINFYLPTLLMLWFYAKIYKAVRQHCQHRELINRSLPSFSEIKLRPENPKGDAKKPGKESPWEVLKRKPKDAGGGSVLKSPSQTPKEMKSPVVFSQEDDREVDKLYCFPLDIVHMQAAAEGSSRDYVAVNRSHGQLKTDEQGLNTHGASEISEDQMLGDSQSFSRTDSDTTTETAPGKGKLRSGSNTGLDYIKFTWKRLRSHSRQYVSGLHMNRERKAAKQLGFIMAAFILCWIPYFIFFMVIAFCKNCCNEHLHMFTIWLGYINSTLNPLIYPLCNENFKKTFKRILHIRS.

The Extracellular portion of the chain corresponds to M1–P29. N-linked (GlcNAc...) asparagine glycans are attached at residues N5 and N18. A helical membrane pass occupies residues L30–Y50. The Cytoplasmic segment spans residues A51 to L64. The helical transmembrane segment at Y65–L89 threads the bilayer. Topologically, residues M90–R97 are extracellular. A helical transmembrane segment spans residues P98 to I123. C100 and C180 are disulfide-bonded. Residues D107 and T112 each coordinate histamine. The important for agonist binding stretch occupies residues D107–T112. At D124–A144 the chain is on the cytoplasmic side. Residues T140 and T142 each carry the phosphothreonine modification. A helical membrane pass occupies residues S145–G164. At W165–T188 the chain is on the extracellular side. The helical transmembrane segment at W189–A211 threads the bilayer. N198 serves as a coordination point for histamine. Residues K212–Q416 lie on the Cytoplasmic side of the membrane. S230 carries the post-translational modification Phosphoserine. Residues K238 to K261 are compositionally biased toward basic and acidic residues. A disordered region spans residues K238–Q291. Position 279 is a phosphothreonine (T279). S344 and S347 each carry phosphoserine. The tract at residues E345–G379 is disordered. The span at G353 to T369 shows a compositional bias: polar residues. A phosphoserine mark is found at S380, S396, and S398. Residues L417–F440 form a helical membrane-spanning segment. Residues F424–W428 are important for agonist binding. Y431 provides a ligand contact to histamine. A disulfide bridge links C441 with C444. At C441 to N446 the chain is on the extracellular side. Residues E447–P469 traverse the membrane as a helical segment. The Cytoplasmic portion of the chain corresponds to L470–S487.

The protein belongs to the G-protein coupled receptor 1 family. In terms of processing, phosphorylation at sites in the second and third cytoplasmic loops independently contribute to agonist-induced receptor down-regulation.

Its subcellular location is the cell membrane. In terms of biological role, G-protein-coupled receptor for histamine, a biogenic amine that functions as an immune modulator and a neurotransmitter. Through the H1 receptor, histamine mediates the contraction of smooth muscles and increases capillary permeability due to contraction of terminal venules. Also mediates neurotransmission in the central nervous system and thereby regulates circadian rhythms, emotional and locomotor activities as well as cognitive functions. The sequence is that of Histamine H1 receptor from Homo sapiens (Human).